Consider the following 156-residue polypeptide: Small ribosomal subunit protein uS7 (156 aa).

The protein belongs to the universal ribosomal protein uS7 family. Part of the 30S ribosomal subunit. Contacts proteins S9 and S11.

In terms of biological role, one of the primary rRNA binding proteins, it binds directly to 16S rRNA where it nucleates assembly of the head domain of the 30S subunit. Is located at the subunit interface close to the decoding center, probably blocks exit of the E-site tRNA. This is Small ribosomal subunit protein uS7 from Teredinibacter turnerae (strain ATCC 39867 / T7901).